We begin with the raw amino-acid sequence, 538 residues long: Chaperonin GroEL (538 aa).

ATP-binding positions include 29–32, 86–90, glycine 413, 479–481, and aspartate 495; these read TLGP, DGTTT, and DAL.

It belongs to the chaperonin (HSP60) family. In terms of assembly, forms a cylinder of 14 subunits composed of two heptameric rings stacked back-to-back. Interacts with the co-chaperonin GroES.

It localises to the cytoplasm. It carries out the reaction ATP + H2O + a folded polypeptide = ADP + phosphate + an unfolded polypeptide.. Functionally, together with its co-chaperonin GroES, plays an essential role in assisting protein folding. The GroEL-GroES system forms a nano-cage that allows encapsulation of the non-native substrate proteins and provides a physical environment optimized to promote and accelerate protein folding. This is Chaperonin GroEL from Thermotoga maritima (strain ATCC 43589 / DSM 3109 / JCM 10099 / NBRC 100826 / MSB8).